Consider the following 121-residue polypeptide: Aspartate 1-decarboxylase (121 aa).

Ser-25 (schiff-base intermediate with substrate; via pyruvic acid) is an active-site residue. Ser-25 is subject to Pyruvic acid (Ser). Position 57 (Thr-57) interacts with substrate. Tyr-58 (proton donor) is an active-site residue. 73 to 75 serves as a coordination point for substrate; the sequence is GAA.

Belongs to the PanD family. As to quaternary structure, heterooctamer of four alpha and four beta subunits. The cofactor is pyruvate. Post-translationally, is synthesized initially as an inactive proenzyme, which is activated by self-cleavage at a specific serine bond to produce a beta-subunit with a hydroxyl group at its C-terminus and an alpha-subunit with a pyruvoyl group at its N-terminus.

It is found in the cytoplasm. It catalyses the reaction L-aspartate + H(+) = beta-alanine + CO2. The protein operates within cofactor biosynthesis; (R)-pantothenate biosynthesis; beta-alanine from L-aspartate: step 1/1. Catalyzes the pyruvoyl-dependent decarboxylation of aspartate to produce beta-alanine. The chain is Aspartate 1-decarboxylase from Sulfurimonas denitrificans (strain ATCC 33889 / DSM 1251) (Thiomicrospira denitrificans (strain ATCC 33889 / DSM 1251)).